A 664-amino-acid polypeptide reads, in one-letter code: Prelamin-A/C (664 aa).

At Met1 the chain carries N-acetylmethionine. The interval 1 to 25 (METPSQRRATRSGAQASSTPLSPTR) is disordered. Residues 1 to 33 (METPSQRRATRSGAQASSTPLSPTRITRLQEKE) are head. Residues 1–130 (METPSQRRAT…TKKEGDLIAA (130 aa)) form an interaction with MLIP region. Thr3 is subject to Phosphothreonine. Phosphoserine is present on Ser5. The residue at position 10 (Thr10) is a Phosphothreonine. Ser12 and Ser18 each carry phosphoserine. Thr19 is subject to Phosphothreonine. Ser22 carries the post-translational modification Phosphoserine; by CDK1. Residues 31–387 (EKEDLQELND…KLLEGEEERL (357 aa)) enclose the IF rod domain. At Lys32 the chain carries N6-acetyllysine; alternate. Lys32 is subject to N6-succinyllysine; alternate. Residue Lys32 forms a Glycyl lysine isopeptide (Lys-Gly) (interchain with G-Cter in SUMO2); alternate linkage. Positions 34–70 (DLQELNDRLAVYIDRVRSLETENAGLRLRITESEEVV) are coil 1A. Residues Ser51, Ser66, and Ser71 each carry the phosphoserine modification. The linker 1 stretch occupies residues 71–80 (SREVSGIKAA). N6-acetyllysine occurs at positions 78 and 97. The interval 81 to 218 (YEAELGDARK…NIYSEELRET (138 aa)) is coil 1B. Lys97 is covalently cross-linked (Glycyl lysine isopeptide (Lys-Gly) (interchain with G-Cter in SUMO2)). Phosphoserine is present on Ser107. Residues Lys108, Lys114, Lys123, Lys135, Lys144, and Lys155 each carry the N6-acetyllysine modification. Lys171 is modified (N6-acetyllysine; alternate). Lys171 is subject to N6-succinyllysine; alternate. Residue Lys171 forms a Glycyl lysine isopeptide (Lys-Gly) (interchain with G-Cter in SUMO2); alternate linkage. Lys180, Lys201, and Lys208 each carry N6-acetyllysine. A Glycyl lysine isopeptide (Lys-Gly) (interchain with G-Cter in SUMO2); alternate cross-link involves residue Lys201. Lys201 is covalently cross-linked (Glycyl lysine isopeptide (Lys-Gly) (interchain with G-Cter in SUMO); alternate). Lys208 participates in a covalent cross-link: Glycyl lysine isopeptide (Lys-Gly) (interchain with G-Cter in SUMO2). Ser212 bears the Phosphoserine mark. Residues Lys219 and Lys233 each participate in a glycyl lysine isopeptide (Lys-Gly) (interchain with G-Cter in SUMO2) cross-link. Positions 219–242 (KRRHETRLVEIDNGKQREFESRLA) are linker 2. N6-acetyllysine occurs at positions 233, 260, 265, and 270. The tract at residues 243-383 (DALQELRAQH…HAYRKLLEGE (141 aa)) is coil 2. Residues 259–331 (YKKELEKTYS…DLEDSLARER (73 aa)) form a necessary and sufficient for the interaction with IFFO1 region. Lys260 participates in a covalent cross-link: Glycyl lysine isopeptide (Lys-Gly) (interchain with G-Cter in SUMO2); alternate. Lys270 participates in a covalent cross-link: Glycyl lysine isopeptide (Lys-Gly) (interchain with G-Cter in SUMO2); alternate. Position 277 is a phosphoserine (Ser277). The residue at position 282 (Ser282) is a Phosphoserine; by ATR. Phosphoserine is present on residues Ser301 and Ser307. Lys311 is covalently cross-linked (Glycyl lysine isopeptide (Lys-Gly) (interchain with G-Cter in SUMO2); alternate). Residues Lys311, Lys316, and Lys341 each carry the N6-acetyllysine modification. Residues Lys366 and Lys378 each participate in a glycyl lysine isopeptide (Lys-Gly) (interchain with G-Cter in SUMO2) cross-link. The tract at residues 384 to 442 (EERLRLSPSPTSQRSRGRASSHSSQTQGGGSVTKKRKLESTESRSSFSQHARTSGRVAV) is disordered. The tail stretch occupies residues 384–664 (EERLRLSPSP…TQSPQNCSIM (281 aa)). Position 390 is a phosphoserine (Ser390). Residue Ser392 is modified to Phosphoserine; by CDK1. Position 395 is a phosphoserine; by ATR (Ser395). Residues Ser398, Ser403, Ser404, Ser406, Ser407, and Ser414 each carry the phosphoserine modification. At Thr416 the chain carries Phosphothreonine. N6-acetyllysine is present on Lys417. Residues Lys417 and Lys420 each participate in a glycyl lysine isopeptide (Lys-Gly) (interchain with G-Cter in SUMO2) cross-link. The Nuclear localization signal signature appears at 417–422 (KKRKLE). 4 positions are modified to phosphoserine: Ser423, Ser426, Ser429, and Ser431. Positions 426 to 435 (SRSSFSQHAR) are enriched in polar residues. The 118-residue stretch at 428 to 545 (SSFSQHARTS…EEVAMRKLVR (118 aa)) folds into the LTD domain. Lys450 is covalently cross-linked (Glycyl lysine isopeptide (Lys-Gly) (interchain with G-Cter in SUMO2); alternate). N6-acetyllysine occurs at positions 450 and 457. A phosphoserine mark is found at Ser458 and Ser463. Residues Lys470 and Lys486 each participate in a glycyl lysine isopeptide (Lys-Gly) (interchain with G-Cter in SUMO2) cross-link. At Lys486 the chain carries N6-acetyllysine. Phosphothreonine is present on residues Thr496, Thr505, and Thr510. Phosphoserine is present on residues Ser533 and Ser546. The residue at position 548 (Thr548) is a Phosphothreonine. Residues 552–576 (DDEDEDGDDLLHHHHGSHCSSSGDP) form a disordered region. Phosphoserine occurs at positions 568 and 571. Lys597 participates in a covalent cross-link: Glycyl lysine isopeptide (Lys-Gly) (interchain with G-Cter in SUMO2); alternate. Lys597 is covalently cross-linked (Glycyl lysine isopeptide (Lys-Gly) (interchain with G-Cter in SUMO1); alternate). Residues 598–619 (ASASGSGAQVGGPISSGSSASS) form a disordered region. Ser612, Ser613, Ser616, and Ser619 each carry phosphoserine. Residues Ser625 and Ser628 are each glycosylated (O-linked (GlcNAc) serine). Ser628, Ser632, Ser636, and Ser652 each carry phosphoserine. The propeptide at 647-661 (LLGNSSPRTQSPQNC) is removed in Lamin-A/C form. Cys661 carries the cysteine methyl ester modification. A lipid anchor (S-farnesyl cysteine) is attached at Cys661. The propeptide at 662–664 (SIM) is removed in Prelamin-A/C form and in Lamin-A/C form.

This sequence belongs to the intermediate filament family. Homodimer of lamin A and lamin C. Lamin dimers then assemble into dimeric head-to-tail polymers. Ultimately, two head-to-tail polymers assemble laterally into a protofilament with a uniformly shaped rod of 3.5 nm in diameter. Interacts with lamin-associated polypeptides IA, IB and TMPO-alpha, RB1 and with emerin. Interacts with SREBF1, SREBF2, SUN2 and TMEM43. Interacts with TMEM201. Proteolytically processed isoform A interacts with NARF. Interacts with SUN1. Interacts with MLIP. Interacts with DMPK; may regulate nuclear envelope stability. Interacts with SUV39H1; the interaction increases stability of SUV39H1. Interacts with SYNE2. Interacts with ITSN1 isoform 2. Interacts with IFFO1; enables the formation of an interior nucleoskeleton that is recruited to DNA double-strand breaks. As to quaternary structure, interacts with EMD. In terms of assembly, interacts (via C-terminus) with LEMD2 (via N-terminus) (in vitro). Post-translationally, proteolytic cleavage of the C-terminal of 18 residues of prelamin-A/C results in the production of lamin-A/C. The prelamin-A/C maturation pathway includes farnesylation of CAAX motif by protein farnesyltransferase (FNTA and FNTB), removal of the last three amino acids (-AAX) by RCE1/FACE2 and/or ZMPSTE24, methylation of the C-terminal cysteine by ICMT and endoproteolytic removal of the last 15 C-terminal amino acids by ZMPSTE24. Proteolytic cleavage requires prior farnesylation and methylation, and absence of these blocks cleavage. In terms of processing, farnesylation of prelamin-A/C facilitates nuclear envelope targeting. Phosphorylation plays a key role in lamin organization, subcellular localization and nuclear envelope disintegration. Phosphorylation by CDK1 at Ser-22 and Ser-392 at the onset of mitosis drives lamin disassembly and nuclear envelope breakdown. Phosphorylation at Ser-22 and Ser-392 during interphase promotes localization to the nucleoplasm and regulates lamina assembly. Phosphorylation at Ser-22, Ser-392 and Ser-628 during interphase causes redistribution between the nucleus and the cytoplasm. Phosphorylation at Ser-22 by CDK1 regulates matrix stiffness. Phosphorylation status of Ser-22 determines its localization between double-strand break (DSB) sites and the nuclear matrix. Phosphorylated by ATR at Ser-282 in response to DNA damage, leading to lamin disassembly and nuclear envelope rupture. Phosphorylation also regulates stability in micronuclei arising from genome instability: phosphorylation at Ser-395 by ATR in response to genome instability and double-stranded DNA breaks primes LMNA for subsequent phosphorylation at Ser-392 by CDK1 and micronuclei envelope rupture. The rupture of micronuclear envelope triggers the cGAS-STING pathway thereby activating the type I interferon response and innate immunity. Post-translationally, acetylation by KAT8 is required for nuclear architecture. In terms of processing, sumoylation is necessary for the localization to the nuclear envelope. In terms of tissue distribution, in the arteries, prelamin-A/C accumulation is not observed in young healthy vessels but is prevalent in medial vascular smooth muscle cells (VSMCs) from aged individuals and in atherosclerotic lesions, where it often colocalizes with senescent and degenerate VSMCs. Prelamin-A/C expression increases with age and disease. In normal aging, the accumulation of prelamin-A/C is caused in part by the down-regulation of ZMPSTE24/FACE1 in response to oxidative stress.

The protein resides in the nucleus lamina. The protein localises to the nucleus envelope. It is found in the nucleus. Its subcellular location is the nucleoplasm. It localises to the nucleus matrix. The protein resides in the nucleus speckle. In terms of biological role, lamins are intermediate filament proteins that assemble into a filamentous meshwork, and which constitute the major components of the nuclear lamina, a fibrous layer on the nucleoplasmic side of the inner nuclear membrane. Lamins provide a framework for the nuclear envelope, bridging the nuclear envelope and chromatin, thereby playing an important role in nuclear assembly, chromatin organization, nuclear membrane and telomere dynamics. Lamin A and C also regulate matrix stiffness by conferring nuclear mechanical properties. The structural integrity of the lamina is strictly controlled by the cell cycle, as seen by the disintegration and formation of the nuclear envelope in prophase and telophase, respectively. Lamin A and C are present in equal amounts in the lamina of mammals. Also invoved in DNA repair: recruited by DNA repair proteins XRCC4 and IFFO1 to the DNA double-strand breaks (DSBs) to prevent chromosome translocation by immobilizing broken DNA ends. Required for normal development of peripheral nervous system and skeletal muscle and for muscle satellite cell proliferation. Required for osteoblastogenesis and bone formation. Also prevents fat infiltration of muscle and bone marrow, helping to maintain the volume and strength of skeletal muscle and bone. Required for cardiac homeostasis. Functionally, prelamin-A/C can accelerate smooth muscle cell senescence. It acts to disrupt mitosis and induce DNA damage in vascular smooth muscle cells (VSMCs), leading to mitotic failure, genomic instability, and premature senescence. This Homo sapiens (Human) protein is Prelamin-A/C (LMNA).